The primary structure comprises 535 residues: T-complex protein 1 subunit beta (535 aa).

Met1 is modified (N-acetylmethionine). Ala2 is subject to N-acetylalanine. Ser3 carries the post-translational modification Phosphoserine. An N6-acetyllysine modification is found at Lys13. Residue Gly44 participates in ADP binding. An ATP-binding site is contributed by Gly44. The residue at position 60 (Ser60) is a Phosphoserine. Asp97 serves as a coordination point for Mg(2+). ADP contacts are provided by Gly98, Thr99, Thr100, and Ser101. Residues Gly98, Thr99, and Thr100 each coordinate ATP. The residue at position 154 (Lys154) is an N6-acetyllysine. Ser168 and Ser169 together coordinate ADP. Lys181 bears the N6-acetyllysine mark. A Glycyl lysine isopeptide (Lys-Gly) (interchain with G-Cter in SUMO2) cross-link involves residue Lys248. Ser260 is subject to Phosphoserine. Thr261 bears the Phosphothreonine mark. 3 residues coordinate ADP: Gly410, Glu495, and Lys500. ATP-binding residues include Glu495 and Lys500.

This sequence belongs to the TCP-1 chaperonin family. As to quaternary structure, component of the chaperonin-containing T-complex (TRiC), a hexadecamer composed of two identical back-to-back stacked rings enclosing a protein folding chamber. Each ring is made up of eight different subunits: TCP1/CCT1, CCT2, CCT3, CCT4, CCT5, CCT6A/CCT6, CCT7, CCT8. Interacts with PACRG. Interacts with FLCN. Interacts with DLEC1. Interacts with SVEP1.

The protein localises to the cytoplasm. The enzyme catalyses ATP + H2O = ADP + phosphate + H(+). Functionally, component of the chaperonin-containing T-complex (TRiC), a molecular chaperone complex that assists the folding of actin, tubulin and other proteins upon ATP hydrolysis. The TRiC complex mediates the folding of WRAP53/TCAB1, thereby regulating telomere maintenance. As part of the TRiC complex may play a role in the assembly of BBSome, a complex involved in ciliogenesis regulating transports vesicles to the cilia. In Homo sapiens (Human), this protein is T-complex protein 1 subunit beta.